We begin with the raw amino-acid sequence, 120 residues long: Small cysteine and glycine repeat-containing protein 2 (120 aa).

The segment at 4-104 (CGCGGCGGCG…TCHSCGCGCG (101 aa)) is 19 X 2 AA repeats of CG.

This sequence belongs to the KRTAP type 28 family.

In the hair cortex, hair keratin intermediate filaments are embedded in an interfilamentous matrix, consisting of hair keratin-associated proteins (KRTAP), which are essential for the formation of a rigid and resistant hair shaft through their extensive disulfide bond cross-linking with abundant cysteine residues of hair keratins. The matrix proteins include the high-sulfur and high-glycine-tyrosine keratins. This Homo sapiens (Human) protein is Small cysteine and glycine repeat-containing protein 2.